Reading from the N-terminus, the 671-residue chain is Fusexin 1 (671 aa).

Over 1 to 12 (MRAVSDFLKNKW) the chain is Cytoplasmic. Residues 13-33 (VAVPAVALLILSLGFLAQNYI) form a helical membrane-spanning segment. Residues 34–574 (TGSFVSGDQI…DPFCADGPLE (541 aa)) are Extracellular-facing. 4 disulfide bridges follow: Cys145-Cys180, Cys409-Cys452, Cys480-Cys500, and Cys513-Cys528. The fusion loop stretch occupies residues 168–173 (GAIADY). Residues 575–595 (MLSKMFHLVAGTAVAFFTGSL) traverse the membrane as a helical segment. The Cytoplasmic segment spans residues 596–628 (GYRAGRWVDGEYQIKGGFDPLKSRSVSRAKRGR). A helical transmembrane segment spans residues 629 to 649 (FLIGLIAELVSFLLGFYVILL). A topological domain (extracellular) is located at residue Val650. Residues 651-671 (PIWAQLMVILGYVLFKYYTPF) form a helical membrane-spanning segment.

This sequence belongs to the HAP2/GCS1 family. Fusexin 1 subfamily. In terms of assembly, homotrimer stabilized by interdomain contacts and numerous Ca(2+) and Na(+) ions.

The protein localises to the cell surface. Its subcellular location is the cell membrane. Functionally, exhibits fusogenic activity. Mediates cell-cell fusion in mammalian cells (bilateral fusion). The polypeptide is Fusexin 1 (Natrinema altunense (strain JCM 12890 / CGMCC 1.3731 / AJ2)).